The following is a 258-amino-acid chain: Cytochrome b-c1 complex subunit Rieske-1, mitochondrial (258 aa).

The N-terminal 46 residues, 1 to 46 (WPVRSAAPSSSAFISANHFSSDDDSSSPRSISPSLASVFLHHTRGF), are a transit peptide targeting the mitochondrion. The Mitochondrial matrix portion of the chain corresponds to 47–95 (SSNSVSPAHDMGLVPDLPPTVAAIKNPTSKIVYDEHNHERYPPGDPSKR). A helical transmembrane segment spans residues 96 to 118 (AFAYFVLTGGRFVYASLMRLLIL). Over 119–258 (KFVLSMSASK…FLEENKLLIG (140 aa)) the chain is Mitochondrial intermembrane. A Rieske domain is found at 161 to 256 (RRRTEDDISL…YSFLEENKLL (96 aa)). [2Fe-2S] cluster-binding residues include cysteine 201, histidine 203, cysteine 220, and histidine 223. A disulfide bridge links cysteine 206 with cysteine 222.

This sequence belongs to the Rieske iron-sulfur protein family. In terms of assembly, component of the ubiquinol-cytochrome c oxidoreductase (cytochrome b-c1 complex, complex III, CIII), a multisubunit enzyme composed of 3 respiratory subunits cytochrome b, cytochrome c1 and Rieske protein, 2 core protein subunits, and several low-molecular weight protein subunits. The complex exists as an obligatory dimer and forms supercomplexes (SCs) in the inner mitochondrial membrane with cytochrome c oxidase (complex IV, CIV). [2Fe-2S] cluster is required as a cofactor.

It localises to the mitochondrion inner membrane. It catalyses the reaction a quinol + 2 Fe(III)-[cytochrome c](out) = a quinone + 2 Fe(II)-[cytochrome c](out) + 2 H(+)(out). Its function is as follows. Component of the ubiquinol-cytochrome c oxidoreductase, a multisubunit transmembrane complex that is part of the mitochondrial electron transport chain which drives oxidative phosphorylation. The respiratory chain contains 3 multisubunit complexes succinate dehydrogenase (complex II, CII), ubiquinol-cytochrome c oxidoreductase (cytochrome b-c1 complex, complex III, CIII) and cytochrome c oxidase (complex IV, CIV), that cooperate to transfer electrons derived from NADH and succinate to molecular oxygen, creating an electrochemical gradient over the inner membrane that drives transmembrane transport and the ATP synthase. The cytochrome b-c1 complex catalyzes electron transfer from ubiquinol to cytochrome c, linking this redox reaction to translocation of protons across the mitochondrial inner membrane, with protons being carried across the membrane as hydrogens on the quinol. In the process called Q cycle, 2 protons are consumed from the matrix, 4 protons are released into the intermembrane space and 2 electrons are passed to cytochrome c. The Rieske protein is a catalytic core subunit containing a [2Fe-2S] iron-sulfur cluster. It cycles between 2 conformational states during catalysis to transfer electrons from the quinol bound in the Q(0) site in cytochrome b to cytochrome c1. This is Cytochrome b-c1 complex subunit Rieske-1, mitochondrial from Nicotiana tabacum (Common tobacco).